We begin with the raw amino-acid sequence, 66 residues long: Toxin Tppa1 (66 aa).

The LCN-type CS-alpha/beta domain occupies 1–63 (KDGYLVGNDG…TWSRSTNRCG (63 aa)). Cystine bridges form between Cys11/Cys62, Cys15/Cys37, Cys23/Cys43, and Cys27/Cys45.

It belongs to the long (4 C-C) scorpion toxin superfamily. Sodium channel inhibitor family. Beta subfamily. As to expression, expressed by the venom gland.

The protein resides in the secreted. Functionally, beta toxins bind voltage-independently at site-4 of sodium channels (Nav) and shift the voltage of activation toward more negative potentials thereby affecting sodium channel activation and promoting spontaneous and repetitive firing. This chain is Toxin Tppa1, found in Tityus pachyurus (Colombian scorpion).